The primary structure comprises 322 residues: Gluconeogenesis factor (322 aa).

NAD(+) is bound by residues Thr13, Asn217–Met219, Lys263–Glu267, and Arg300–His301.

This sequence belongs to the gluconeogenesis factor family.

It is found in the cytoplasm. Functionally, required for morphogenesis under gluconeogenic growth conditions. The protein is Gluconeogenesis factor of Halalkalibacterium halodurans (strain ATCC BAA-125 / DSM 18197 / FERM 7344 / JCM 9153 / C-125) (Bacillus halodurans).